We begin with the raw amino-acid sequence, 109 residues long: Peptide chaperone MftB (109 aa).

Belongs to the peptide chaperone MftB family. In terms of assembly, interacts with MftA and MftC.

In terms of biological role, peptide chaperone involved in the biosynthesis of the enzyme cofactor mycofactocin (MFT). Binds MftA and MftC with high affinity, and is essential for MftC activity on MftA, likely via the formation of a ternary complex. The polypeptide is Peptide chaperone MftB (Mycobacterium ulcerans (strain Agy99)).